The primary structure comprises 342 residues: Heparan sulfate glucosamine 3-O-sulfotransferase 6 (342 aa).

The Cytoplasmic segment spans residues 1-31 (MAGSGGLGGGAGDLQGAGTGQGTALRALRAP). Residues 32 to 49 (LALVVLLLSAYCLFALPG) traverse the membrane as a helical; Signal-anchor for type II membrane protein segment. Residues 50 to 342 (RCPPAARAPA…QMTGQDFGWD (293 aa)) are Lumenal-facing. The tract at residues 56–75 (RAPAPVPAPAEPPHTSLRLR) is disordered. 100–104 (KGGTR) is a binding site for 3'-phosphoadenylyl sulfate. Residues 122-128 (EPHFFDR) and 153-156 (KTPS) each bind substrate. 3'-phosphoadenylyl sulfate is bound by residues Arg-181 and Ser-189. A substrate-binding site is contributed by 220–221 (WS). Asn-281 carries an N-linked (GlcNAc...) asparagine glycan. A disulfide bond links Cys-288 and Cys-300. Residue 305–309 (KGRPH) participates in 3'-phosphoadenylyl sulfate binding.

Belongs to the sulfotransferase 1 family. As to expression, expressed in liver and kidney, followed by heart, brain, lung and testis.

The protein resides in the golgi apparatus membrane. It catalyses the reaction alpha-D-glucosaminyl-[heparan sulfate](n) + 3'-phosphoadenylyl sulfate = 3-sulfo-alpha-D-glucosaminyl-[heparan sulfate](n) + adenosine 3',5'-bisphosphate + H(+). Its function is as follows. Sulfotransferase that utilizes 3'-phospho-5'-adenylyl sulfate (PAPS) to catalyze the transfer of a sulfo group to heparan sulfate. Unlike 3-OST-1, does not convert non-anticoagulant heparan sulfate to anticoagulant heparan sulfate. In Mus musculus (Mouse), this protein is Heparan sulfate glucosamine 3-O-sulfotransferase 6 (Hs3st6).